The sequence spans 185 residues: Lectin B4 (185 aa).

Residue asparagine 48 is glycosylated (N-linked (GlcNAc...) asparagine). The Mn(2+) site is built by glutamate 111 and aspartate 113. Residues aspartate 113, tyrosine 115, asparagine 117, and aspartate 120 each contribute to the Ca(2+) site. Position 120 (aspartate 120) interacts with Mn(2+). N-linked (GlcNAc...) asparagine glycosylation occurs at asparagine 122. Mn(2+) is bound at residue histidine 125.

Belongs to the leguminous lectin family. Homo- or heterotetramer. V.villosa isolectins are composed of either two subunits a and two subunits B (A2B2), four subunits A (A4), or four subunits B (B4). The predominant form, isolectin B4, has no A1 erythrocyte agglutinating activity.

Its function is as follows. N-acetyl-D-galactosamine specific lectin. Binds the Tn determinant (GalNAc-alpha-O-Ser/Thr) of the tumor-associated glycopeptide. Could be required for agglutinating cells such as Tn-exposed erythrocytes. This is Lectin B4 from Vicia villosa (Hairy vetch).